Consider the following 410-residue polypeptide: MSGAEEAGGGGPAAGPAGSVPAGVGVGAGAGAGVGVGAGPGAAAGPAAAAALGEAAGPGLPDEAGLAGARQLQEAAGDPDAPPKKRLRAAEAAEAAAAAAAAGSGKLEERLYSVLCCTVCLDLPKASVYQCTNGHLMCAGCFIHLLADARLKEEQATCPNCRCEISKSLCCRNLAVEKAVSELPSECGFCLCQFPRSILERHQKEECQDRVTQCKYKRIGCPWHGPFHELTVHEAACAHPTKTGNELMEILDEMDQSHRKEMQLYNSIFSLLSFEKIGYTEVQFRPYRTDDFITRLYYETPRFTVLNQTWVLKARVNDSERNPNLSCKRTLSFQLLLKSKVTAPLECSFLLLKGPYDDVKISPVIYHFVFTNESNETDYVPLPIVDSVECNKLLAAKNINLRLFLFQIQK.

The span at 1–13 (MSGAEEAGGGGPA) shows a compositional bias: gly residues. A disordered region spans residues 1–22 (MSGAEEAGGGGPAAGPAGSVPA). The segment at 117–162 (CTVCLDLPKASVYQCTNGHLMCAGCFIHLLADARLKEEQATCPNCR) adopts an RING-type; degenerate zinc-finger fold. Residues 158–231 (CPNCRCEISK…PWHGPFHELT (74 aa)) form a TRAF-type zinc finger.

Belongs to the ZFTRAF1 family. Interacts with LGALS3.

The protein resides in the cytoplasm. It localises to the perinuclear region. In Bos taurus (Bovine), this protein is Zinc finger TRAF-type-containing protein 1.